Here is a 386-residue protein sequence, read N- to C-terminus: Glucose-1-phosphate adenylyltransferase (386 aa).

Residues tyrosine 100, glycine 165, 180–181, and serine 191 contribute to the alpha-D-glucose 1-phosphate site; that span reads EK.

The protein belongs to the bacterial/plant glucose-1-phosphate adenylyltransferase family. Homotetramer.

The catalysed reaction is alpha-D-glucose 1-phosphate + ATP + H(+) = ADP-alpha-D-glucose + diphosphate. It functions in the pathway glycan biosynthesis; glycogen biosynthesis. Involved in the biosynthesis of ADP-glucose, a building block required for the elongation reactions to produce glycogen. Catalyzes the reaction between ATP and alpha-D-glucose 1-phosphate (G1P) to produce pyrophosphate and ADP-Glc. This is Glucose-1-phosphate adenylyltransferase from Clostridium beijerinckii (strain ATCC 51743 / NCIMB 8052) (Clostridium acetobutylicum).